The primary structure comprises 199 residues: Holliday junction branch migration complex subunit RuvA (199 aa).

Positions 1 to 63 (MIDYIKGNLV…EDSQRLFGFT (63 aa)) are domain I. Residues 64–142 (TRTERLLFEK…DMAPMLEPAA (79 aa)) form a domain II region. Residues 143–153 (GADKQQKNPQL) form a flexible linker region. A domain III region spans residues 153–199 (LEDALEALRALGYVEKELKKVEKQLKAETLETDEYIRRALALMLKRP).

Belongs to the RuvA family. Homotetramer. Forms an RuvA(8)-RuvB(12)-Holliday junction (HJ) complex. HJ DNA is sandwiched between 2 RuvA tetramers; dsDNA enters through RuvA and exits via RuvB. An RuvB hexamer assembles on each DNA strand where it exits the tetramer. Each RuvB hexamer is contacted by two RuvA subunits (via domain III) on 2 adjacent RuvB subunits; this complex drives branch migration. In the full resolvosome a probable DNA-RuvA(4)-RuvB(12)-RuvC(2) complex forms which resolves the HJ.

The protein resides in the cytoplasm. Its function is as follows. The RuvA-RuvB-RuvC complex processes Holliday junction (HJ) DNA during genetic recombination and DNA repair, while the RuvA-RuvB complex plays an important role in the rescue of blocked DNA replication forks via replication fork reversal (RFR). RuvA specifically binds to HJ cruciform DNA, conferring on it an open structure. The RuvB hexamer acts as an ATP-dependent pump, pulling dsDNA into and through the RuvAB complex. HJ branch migration allows RuvC to scan DNA until it finds its consensus sequence, where it cleaves and resolves the cruciform DNA. This is Holliday junction branch migration complex subunit RuvA from Shouchella clausii (strain KSM-K16) (Alkalihalobacillus clausii).